Reading from the N-terminus, the 652-residue chain is Tetracycline resistance protein TetP (652 aa).

One can recognise a tr-type G domain in the interval 2–252 (KKIINIGIVA…CSYFPFASND (251 aa)). Residues 11 to 18 (AHVDAGKT), 75 to 79 (DTPGH), and 129 to 132 (NKLD) each bind GTP.

It belongs to the TRAFAC class translation factor GTPase superfamily. Classic translation factor GTPase family. TetM/TetO subfamily.

Abolishes the inhibitory effect of tetracyclin on protein synthesis by a non-covalent modification of the ribosomes. In Clostridium perfringens, this protein is Tetracycline resistance protein TetP (tetP).